Consider the following 379-residue polypeptide: MTAESQQSPTRATAAGAGLQQTSGFTMPVVKVEKDPAPEASMSNGGSEVDDTHKGRRRKRPLQKGKPPYSYIALIAMSIANSADRKLTLGGIYKFITERFPFYRDNSKKWQNSIRHNLTLNDCFIKIPREPGRPGKGNYWALDPNAEDMFDSGSFLRRRKRFKRTDLTTYPAYIHDTSMFSPLQVARATYPNTVYPNMTMSPNYSQQIAPHSSVYYPSSSPAFSSAQPRVFSINTLIGHSGSEHAQPPNRSISPEVNSTSSSSCNYGGSAYSSQAGSGTMLPRSTNPVPYSYSVPNSHLQMNQSTYTHSNAQLFGSASRLPMPTSPPMNSDTVDFYGRMSPGQYTSLATYNSNGQLGGTNAYLRHATYSGNMERFVPAV.

The span at 1-11 (MTAESQQSPTR) shows a compositional bias: polar residues. A disordered region spans residues 1–65 (MTAESQQSPT…RRRKRPLQKG (65 aa)). The span at 54 to 63 (KGRRRKRPLQ) shows a compositional bias: basic residues. Residues 66–160 (KPPYSYIALI…DSGSFLRRRK (95 aa)) constitute a DNA-binding region (fork-head). A disordered region spans residues 239 to 265 (HSGSEHAQPPNRSISPEVNSTSSSSCN). A compositionally biased stretch (low complexity) spans 251 to 265 (SISPEVNSTSSSSCN).

As to expression, first expressed at late neural tube and early tailbud stages in the hypophyseal placode. Expression continues in the developing pituitary at late tailbud stages. As development progresses, expressed in the mesoderm of the branchial arches. At stage 38, expressed in the developing thyroid and in the pharyngeal endoderm.

It is found in the nucleus. Transcription factor that binds consensus sites on a variety of gene promoters and activate their transcription. This chain is Forkhead box protein E1, found in Xenopus laevis (African clawed frog).